The sequence spans 78 residues: U7-lycotoxin-Ls1a (78 aa).

An N-terminal signal peptide occupies residues 1–22 (MKLIIFTGLALLLIVSLIDVEA). Positions 23 to 26 (QNEG) are excised as a propeptide.

It belongs to the neurotoxin 19 (CSTX) family. 07 (U7-Lctx) subfamily. In terms of processing, contains 4 disulfide bonds. In terms of tissue distribution, expressed by the venom gland.

The protein resides in the secreted. The sequence is that of U7-lycotoxin-Ls1a from Lycosa singoriensis (Wolf spider).